Reading from the N-terminus, the 63-residue chain is 2-hydroxymuconate tautomerase (63 aa).

Residue Pro-2 is the Proton acceptor; via imino nitrogen of the active site.

It belongs to the 4-oxalocrotonate tautomerase family. In terms of assembly, homohexamer.

The catalysed reaction is (2Z,4E)-2-hydroxyhexa-2,4-dienedioate = (3E)-2-oxohex-3-enedioate. Its pathway is aromatic compound metabolism; salicylate degradation. In terms of biological role, catalyzes the ketonization of 2-hydroxymuconate stereoselectively to yield 2-oxo-3-hexenedioate. In Stutzerimonas stutzeri (Pseudomonas stutzeri), this protein is 2-hydroxymuconate tautomerase (nahJ).